Consider the following 438-residue polypeptide: 3-phosphoshikimate 1-carboxyvinyltransferase (438 aa).

3 residues coordinate 3-phosphoshikimate: K25, S26, and R30. A phosphoenolpyruvate-binding site is contributed by K25. The phosphoenolpyruvate site is built by G99 and R128. S173, Q175, D325, and K352 together coordinate 3-phosphoshikimate. Q175 contacts phosphoenolpyruvate. D325 functions as the Proton acceptor in the catalytic mechanism. Residues R356 and R398 each contribute to the phosphoenolpyruvate site.

Belongs to the EPSP synthase family. Monomer.

It is found in the cytoplasm. It carries out the reaction 3-phosphoshikimate + phosphoenolpyruvate = 5-O-(1-carboxyvinyl)-3-phosphoshikimate + phosphate. It functions in the pathway metabolic intermediate biosynthesis; chorismate biosynthesis; chorismate from D-erythrose 4-phosphate and phosphoenolpyruvate: step 6/7. Its function is as follows. Catalyzes the transfer of the enolpyruvyl moiety of phosphoenolpyruvate (PEP) to the 5-hydroxyl of shikimate-3-phosphate (S3P) to produce enolpyruvyl shikimate-3-phosphate and inorganic phosphate. The sequence is that of 3-phosphoshikimate 1-carboxyvinyltransferase from Prochlorococcus marinus subsp. pastoris (strain CCMP1986 / NIES-2087 / MED4).